The primary structure comprises 363 residues: tRNA(Met) cytidine acetate ligase (363 aa).

ATP-binding positions include 7 to 20 (IAEF…HKYL), G96, N152, and R175.

The protein belongs to the TmcAL family.

It is found in the cytoplasm. It carries out the reaction cytidine(34) in elongator tRNA(Met) + acetate + ATP = N(4)-acetylcytidine(34) in elongator tRNA(Met) + AMP + diphosphate. Catalyzes the formation of N(4)-acetylcytidine (ac(4)C) at the wobble position of elongator tRNA(Met), using acetate and ATP as substrates. First activates an acetate ion to form acetyladenylate (Ac-AMP) and then transfers the acetyl group to tRNA to form ac(4)C34. This chain is tRNA(Met) cytidine acetate ligase, found in Streptococcus thermophilus (strain CNRZ 1066).